Consider the following 556-residue polypeptide: Set1/Ash2 histone methyltransferase complex subunit ASH2 (556 aa).

Polar residues predominate over residues 1 to 19 (MEDSQMDTSSPTESSSEVN). The segment at 1–27 (MEDSQMDTSSPTESSSEVNFTAEEDKS) is disordered. The segment at 34-90 (AGVCYCGKERNLNIVELLCATCSRWVHETCVSYQLGKGKLLPFITNYVFVCKNCSAS) adopts a PHD-type zinc-finger fold. 8 residues coordinate Zn(2+): Cys37, Cys39, Cys52, Cys55, His60, Cys63, Cys84, and Cys87. Positions 216-251 (ASLSKNNRQKRKFPGTDSGPTGKKGRPSSDITANVK) are disordered. Residues 288–510 (SSDWAGKPIP…VSVNFGPAFK (223 aa)) form the B30.2/SPRY domain.

As to quaternary structure, core component of several methyltransferase-containing complexes. Component of the SET1C/COMPASS complex, composed at least of the catalytic subunit Set1, wds/WDR5, Wdr82, Rbbp5, ash2, Cfp1/CXXC1, hcf and Dpy-30L1. Component of the MLL3/4 (Histone-lysine N-methyltransferase/demethylase TRR) complex composed at least of the catalytic subunit trr, ash2, Rbbp5, Dpy-30L1, wds, hcf, ptip, Pa1, Utx, Lpt and Ncoa6. Interacts with hcf. Interacts with trr. Interacts (via B30.2/SPRY domain) with sktl; the interaction is direct. As to expression, in larvae and pupae, expressed in imaginal disks, salivary gland and fat body cells. No expression detected in central nervous system (at protein level).

It localises to the nucleus. The protein resides in the chromosome. Its function is as follows. Transcriptional regulator. Regulates a number of genes involved in wing development including activation of net and bs and repression of rho and kni and controls vein-intervein patterning during wing development. Required for correct expression of a number of homeotic genes including Scr in the first leg imaginal disk and Ubx in the third leg imaginal disk and haltere disks. Required for stabilization of the histone-lysine N-methyltransferase trr and for trimethylation of 'Lys-4' of histone H3. Together with sktl probably plays a role in maintenance of transcriptionally active chromatin through down-regulation of histone H1 hyperphosphorylation. In Drosophila melanogaster (Fruit fly), this protein is Set1/Ash2 histone methyltransferase complex subunit ASH2.